Reading from the N-terminus, the 450-residue chain is Probable rhamnogalacturonase E (450 aa).

A signal peptide spans 1–22 (MTWSTSFLSVHFFAFITTSIHA). Cysteine 43 and cysteine 69 form a disulfide bridge. N-linked (GlcNAc...) asparagine glycosylation is found at asparagine 54, asparagine 92, and asparagine 131. The Proton donor role is filled by aspartate 222. A disulfide bond links cysteine 224 and cysteine 241. N-linked (GlcNAc...) asparagine glycans are attached at residues asparagine 242 and asparagine 257. Histidine 297 is a catalytic residue. N-linked (GlcNAc...) asparagine glycans are attached at residues asparagine 324 and asparagine 329. 2 disulfide bridges follow: cysteine 347–cysteine 353 and cysteine 375–cysteine 384.

It belongs to the glycosyl hydrolase 28 family.

It is found in the secreted. Pectinolytic enzymes consist of four classes of enzymes: pectine lyase, polygalacturonase, pectin methylesterase and rhamnogalacturonase. Hydrolyzes alpha-D-galacturonopyranosyl-(1,2)-alpha-L-rhamnopyranosyl linkages in the backbone of the hairy regions of pectins. This Aspergillus niger protein is Probable rhamnogalacturonase E (rhgE).